The primary structure comprises 312 residues: Methionyl-tRNA formyltransferase (312 aa).

(6S)-5,6,7,8-tetrahydrofolate is bound at residue 113-116; sequence SLLP.

It belongs to the Fmt family.

It catalyses the reaction L-methionyl-tRNA(fMet) + (6R)-10-formyltetrahydrofolate = N-formyl-L-methionyl-tRNA(fMet) + (6S)-5,6,7,8-tetrahydrofolate + H(+). In terms of biological role, attaches a formyl group to the free amino group of methionyl-tRNA(fMet). The formyl group appears to play a dual role in the initiator identity of N-formylmethionyl-tRNA by promoting its recognition by IF2 and preventing the misappropriation of this tRNA by the elongation apparatus. The chain is Methionyl-tRNA formyltransferase from Francisella philomiragia subsp. philomiragia (strain ATCC 25017 / CCUG 19701 / FSC 153 / O#319-036).